The chain runs to 272 residues: ATP synthase subunit delta (272 aa).

The protein belongs to the ATPase delta chain family. As to quaternary structure, F-type ATPases have 2 components, F(1) - the catalytic core - and F(0) - the membrane proton channel. F(1) has five subunits: alpha(3), beta(3), gamma(1), delta(1), epsilon(1). F(0) has three main subunits: a(1), b(2) and c(10-14). The alpha and beta chains form an alternating ring which encloses part of the gamma chain. F(1) is attached to F(0) by a central stalk formed by the gamma and epsilon chains, while a peripheral stalk is formed by the delta and b chains.

The protein resides in the cell membrane. Functionally, f(1)F(0) ATP synthase produces ATP from ADP in the presence of a proton or sodium gradient. F-type ATPases consist of two structural domains, F(1) containing the extramembraneous catalytic core and F(0) containing the membrane proton channel, linked together by a central stalk and a peripheral stalk. During catalysis, ATP synthesis in the catalytic domain of F(1) is coupled via a rotary mechanism of the central stalk subunits to proton translocation. This protein is part of the stalk that links CF(0) to CF(1). It either transmits conformational changes from CF(0) to CF(1) or is implicated in proton conduction. This chain is ATP synthase subunit delta, found in Corynebacterium urealyticum (strain ATCC 43042 / DSM 7109).